A 432-amino-acid polypeptide reads, in one-letter code: Sensor histidine kinase YrkQ (432 aa).

Residues 1–12 (MAHLKFTLTKKL) lie on the Cytoplasmic side of the membrane. Residues 13–33 (ALLIMVAAIVSGVIFLTLQKI) traverse the membrane as a helical segment. The Extracellular segment spans residues 34–145 (TDDLIEGYLS…GFYSSRYYDL (112 aa)). A helical membrane pass occupies residues 146–166 (AFALDLLGATLIFLIIVLFGI). An HAMP domain is found at 167–219 (RQSLRYLKTIHQEIHILEGGELDYEMTIKGHDELAMIAKSIEDLRKAFLDKLK). The Cytoplasmic segment spans residues 167-432 (RQSLRYLKTI…IVLRFWNTKM (266 aa)). Residues 234-432 (EMSHDMRTPL…IVLRFWNTKM (199 aa)) form the Histidine kinase domain. His-237 is subject to Phosphohistidine; by autocatalysis.

Its subcellular location is the cell membrane. It carries out the reaction ATP + protein L-histidine = ADP + protein N-phospho-L-histidine.. In terms of biological role, member of the two-component regulatory system YrkQ/YrkP. Probably activates YrkP by phosphorylation. This Bacillus subtilis (strain 168) protein is Sensor histidine kinase YrkQ (yrkQ).